The primary structure comprises 493 residues: Aerolysin (493 aa).

The N-terminal stretch at 1–23 (MQKIKLTGLSLIISGLLMAQAQA) is a signal peptide. 2 disulfides stabilise this stretch: Cys42–Cys98 and Cys182–Cys187. The segment at 68–84 (WQISGLANGWVIMGPGY) is interaction with host N-linked glycan. The segment at 256-288 (YGLSEKVTTKNKFKWPLVGETELSIEIAANQSW) is part of the transmembrane beta-barrel after proteolytic activation of the toxin and insertion into the host membrane. An interaction with glycans from host GPI-anchor region spans residues 346–355 (RWGGNAWYTH). Positions 446 to 493 (AADSKVRRARSVDGAGQGLRLEIPLDAQELSGLGFNNVSLSVTPAANQ) are excised as a propeptide.

This sequence belongs to the aerolysin family. In terms of assembly, homodimer in solution; homoheptamer in the host membrane. After binding to GPI-anchored proteins in target membranes and proteolytic removal of the C-terminal propeptide, the protein assembles into a heptameric pre-pore complex. A further conformation change leads to insertion into the host membrane. Post-translationally, proteolytic cleavage and subsequent release of the propeptide trigger a major conformation change, leading to the formation of a heptameric pre-pore that then inserts into the host membrane.

The protein resides in the secreted. Its subcellular location is the host cell membrane. Functionally, secreted, cytolytic toxin that forms pores in host membranes after proteolytic removal of a C-terminal propeptide, leading to destruction of the membrane permeability barrier and host cell death. The pores are formed by transmembrane beta-strands and are approximately 3 nm in diameter. The polypeptide is Aerolysin (aerA) (Aeromonas hydrophila).